Here is a 357-residue protein sequence, read N- to C-terminus: 3-isopropylmalate dehydrogenase (357 aa).

An NAD(+)-binding site is contributed by 76 to 89; sequence GPQWDTIDPALRPE. The substrate site is built by Arg96, Arg106, Arg134, and Asp224. Mg(2+) contacts are provided by Asp224, Asp248, and Asp252. 282–294 serves as a coordination point for NAD(+); the sequence is GSAPDIAGQGVAN.

Belongs to the isocitrate and isopropylmalate dehydrogenases family. LeuB type 1 subfamily. As to quaternary structure, homodimer. The cofactor is Mg(2+). Mn(2+) is required as a cofactor.

It localises to the cytoplasm. It catalyses the reaction (2R,3S)-3-isopropylmalate + NAD(+) = 4-methyl-2-oxopentanoate + CO2 + NADH. The protein operates within amino-acid biosynthesis; L-leucine biosynthesis; L-leucine from 3-methyl-2-oxobutanoate: step 3/4. Catalyzes the oxidation of 3-carboxy-2-hydroxy-4-methylpentanoate (3-isopropylmalate) to 3-carboxy-4-methyl-2-oxopentanoate. The product decarboxylates to 4-methyl-2 oxopentanoate. In Xylella fastidiosa (strain 9a5c), this protein is 3-isopropylmalate dehydrogenase.